The primary structure comprises 247 residues: Aspartate/glutamate leucyltransferase (247 aa).

It belongs to the R-transferase family. Bpt subfamily.

Its subcellular location is the cytoplasm. It carries out the reaction N-terminal L-glutamyl-[protein] + L-leucyl-tRNA(Leu) = N-terminal L-leucyl-L-glutamyl-[protein] + tRNA(Leu) + H(+). The catalysed reaction is N-terminal L-aspartyl-[protein] + L-leucyl-tRNA(Leu) = N-terminal L-leucyl-L-aspartyl-[protein] + tRNA(Leu) + H(+). Functions in the N-end rule pathway of protein degradation where it conjugates Leu from its aminoacyl-tRNA to the N-termini of proteins containing an N-terminal aspartate or glutamate. In Chromohalobacter salexigens (strain ATCC BAA-138 / DSM 3043 / CIP 106854 / NCIMB 13768 / 1H11), this protein is Aspartate/glutamate leucyltransferase.